Reading from the N-terminus, the 730-residue chain is Catalase-peroxidase (730 aa).

Over residues 1 to 11 (MDAKTDDKDAG) the composition is skewed to basic and acidic residues. An N-terminal signal peptide occupies residues 1-21 (MDAKTDDKDAGKCPFSSGSHA). The segment at 1–24 (MDAKTDDKDAGKCPFSSGSHAHRN) is disordered. A cross-link (tryptophyl-tyrosyl-methioninium (Trp-Tyr) (with M-244)) is located at residues 96-218 (WHSAGTYRIS…LGAVQMGLIY (123 aa)). Histidine 97 acts as the Proton acceptor in catalysis. The tryptophyl-tyrosyl-methioninium (Tyr-Met) (with W-96) cross-link spans 218-244 (YVNPEGPNGNPDPVGSAKDIRETFYRM). A heme b-binding site is contributed by histidine 259.

The protein belongs to the peroxidase family. Peroxidase/catalase subfamily. Homodimer or homotetramer. Requires heme b as cofactor. Post-translationally, formation of the three residue Trp-Tyr-Met cross-link is important for the catalase, but not the peroxidase activity of the enzyme.

The catalysed reaction is H2O2 + AH2 = A + 2 H2O. It catalyses the reaction 2 H2O2 = O2 + 2 H2O. Bifunctional enzyme with both catalase and broad-spectrum peroxidase activity. The protein is Catalase-peroxidase of Rhodopseudomonas palustris (strain BisA53).